Consider the following 833-residue polypeptide: Leucine--tRNA ligase (833 aa).

Residues 41–52 (PYPSGAGLHVGH) carry the 'HIGH' region motif. Residues 610 to 614 (KMSKS) carry the 'KMSKS' region motif. Lys613 is a binding site for ATP.

Belongs to the class-I aminoacyl-tRNA synthetase family.

Its subcellular location is the cytoplasm. It carries out the reaction tRNA(Leu) + L-leucine + ATP = L-leucyl-tRNA(Leu) + AMP + diphosphate. The chain is Leucine--tRNA ligase from Streptococcus sanguinis (strain SK36).